Reading from the N-terminus, the 97-residue chain is Aspartyl/glutamyl-tRNA(Asn/Gln) amidotransferase subunit C (97 aa).

The protein belongs to the GatC family. As to quaternary structure, heterotrimer of A, B and C subunits.

The enzyme catalyses L-glutamyl-tRNA(Gln) + L-glutamine + ATP + H2O = L-glutaminyl-tRNA(Gln) + L-glutamate + ADP + phosphate + H(+). It carries out the reaction L-aspartyl-tRNA(Asn) + L-glutamine + ATP + H2O = L-asparaginyl-tRNA(Asn) + L-glutamate + ADP + phosphate + 2 H(+). In terms of biological role, allows the formation of correctly charged Asn-tRNA(Asn) or Gln-tRNA(Gln) through the transamidation of misacylated Asp-tRNA(Asn) or Glu-tRNA(Gln) in organisms which lack either or both of asparaginyl-tRNA or glutaminyl-tRNA synthetases. The reaction takes place in the presence of glutamine and ATP through an activated phospho-Asp-tRNA(Asn) or phospho-Glu-tRNA(Gln). The polypeptide is Aspartyl/glutamyl-tRNA(Asn/Gln) amidotransferase subunit C (Synechococcus sp. (strain CC9902)).